Consider the following 347-residue polypeptide: D-alanine--D-alanine ligase (347 aa).

Residues 134 to 332 (KLYAKDLGVK…LAQSLPKTPK (199 aa)) form the ATP-grasp domain. Residue 161-216 (LIGFNFPFIVKPSNAGSSLGVNVVKEEKELIYALDSAFEYSKEVLIEPFIQGVKEY) coordinates ATP. Positions 288, 300, and 302 each coordinate Mg(2+).

The protein belongs to the D-alanine--D-alanine ligase family. The cofactor is Mg(2+). Mn(2+) is required as a cofactor.

It localises to the cytoplasm. The catalysed reaction is 2 D-alanine + ATP = D-alanyl-D-alanine + ADP + phosphate + H(+). Its pathway is cell wall biogenesis; peptidoglycan biosynthesis. Functionally, cell wall formation. The chain is D-alanine--D-alanine ligase from Helicobacter pylori (strain J99 / ATCC 700824) (Campylobacter pylori J99).